A 247-amino-acid chain; its full sequence is MNNLRTVSDTKRAFYSIHTRPVNSVYRRVVEELMVEMHLLRVNEDFRYDPIFALGVTTSFDRFMDGYQPENDKDAIFSAICKAQEADPVQMKKDGQRLTELAQSKSAQEMLDWITQAANSGGDELQWQLRNIAQNPKFKYSRLFAIGLFTLLELSEGNITQDEESLAEFLPNICTVLNISESKLQKDLEIYRGNLDKIAQVRQAMDDILEAQKKRREADQAKKEGSDDTPTTEASTPDSEPTSEVSS.

Residues 198–224 (IAQVRQAMDDILEAQKKRREADQAKKE) adopt a coiled-coil conformation. Residues 209–247 (LEAQKKRREADQAKKEGSDDTPTTEASTPDSEPTSEVSS) form a disordered region. Basic and acidic residues predominate over residues 210–226 (EAQKKRREADQAKKEGS). Over residues 228 to 247 (DTPTTEASTPDSEPTSEVSS) the composition is skewed to polar residues.

It belongs to the THF1 family.

May be involved in photosynthetic membrane biogenesis. The sequence is that of Protein Thf1 from Acaryochloris marina (strain MBIC 11017).